A 452-amino-acid chain; its full sequence is Keratin, type II cytoskeletal 80 (452 aa).

The segment at methionine 1–glutamine 82 is head. Serine 45 carries the post-translational modification Phosphoserine. Residues glutamine 82–leucine 118 are coil 1A. The IF rod domain maps to glutamate 83 to methionine 394. The linker 1 stretch occupies residues glutamine 119 to tyrosine 135. Residues glutamine 136–leucine 227 are coil 1B. Positions alanine 228 to isoleucine 251 are linker 12. Residues valine 252–glutamate 390 form a coil 2 region. A tail region spans residues glutamate 391–glutamate 452. Position 396 is a phosphoserine (serine 396). A disordered region spans residues alanine 412–isoleucine 434.

It belongs to the intermediate filament family. Heterotetramer of two type I and two type II keratins. Weakly expressed in tongue, but not skin or in any other tissues or organs examined.

In Homo sapiens (Human), this protein is Keratin, type II cytoskeletal 80 (KRT80).